Reading from the N-terminus, the 553-residue chain is Putative transport protein YidE (553 aa).

5 helical membrane-spanning segments follow: residues 4–24 (IALT…IGNV), 28–48 (GIGL…HFVS), 65–85 (FGLI…FFAS), 95–115 (LFAV…HKLF), and 158–178 (MSYA…MWML). RCK C-terminal domains lie at 191–276 (QQHE…VIGQ) and 279–361 (DTSL…VLGN). Helical transmembrane passes span 371–391 (MLPV…PVFV), 393–413 (GFPA…ALIL), 439–459 (IVLF…NTLV), 464–484 (LSWI…VGIL), 493–513 (YLTM…LAFA), and 533–553 (LVMF…WSIG).

This sequence belongs to the AAE transporter (TC 2.A.81) family. YidE subfamily.

The protein localises to the cell membrane. The sequence is that of Putative transport protein YidE from Shigella boydii serotype 18 (strain CDC 3083-94 / BS512).